Reading from the N-terminus, the 106-residue chain is NADH-quinone oxidoreductase subunit K (106 aa).

3 helical membrane-spanning segments follow: residues 10 to 30, 35 to 55, and 67 to 87; these read IHYY…GVMV, VLIF…FVTF, and VVFF…AIVI.

It belongs to the complex I subunit 4L family. NDH-1 is composed of 14 different subunits. Subunits NuoA, H, J, K, L, M, N constitute the membrane sector of the complex.

It is found in the cell inner membrane. It catalyses the reaction a quinone + NADH + 5 H(+)(in) = a quinol + NAD(+) + 4 H(+)(out). Its function is as follows. NDH-1 shuttles electrons from NADH, via FMN and iron-sulfur (Fe-S) centers, to quinones in the respiratory chain. The immediate electron acceptor for the enzyme in this species is believed to be ubiquinone. Couples the redox reaction to proton translocation (for every two electrons transferred, four hydrogen ions are translocated across the cytoplasmic membrane), and thus conserves the redox energy in a proton gradient. This chain is NADH-quinone oxidoreductase subunit K, found in Leptospira borgpetersenii serovar Hardjo-bovis (strain JB197).